A 465-amino-acid polypeptide reads, in one-letter code: MTPSTQDKKLWGGRFAEATDGLVELFNASVGFDQRLAEQDIRGSLAHVAMLGQVGILTSEEVTQISDGLGAVLADIRAGTFEWRLDREDVHMNVEAALRDRIGPVAGKLHTARSRNDQVAVDFRLFTKEAALDLADKTRALRAVMLAEAEKHLAAEVILPGYTHLQVAQPILLAHWFMAYVAMLERDEGRFRDAAERMDESPLGSSALAGTPWPIDRHATATALGFARPTANSLDGVGSRDFALEFLSACAILSAHLSRLSEELIVYSTFEFGFLTLPDSHTTGSSIMPQKKNPDVSELARAKAGRVFGNLMGLLTVVKGTPLAYNKDLQEDKEGVFDSYDTLSIVLRLYTEMLPRTVWHAEVTRAAAARGYSTATDVADFLARQGVPFREAHEVVGGLVGLASRSGRQLWDLTDSELRAAHPLLGAEVAQALTVEQSVRARQSFGGTAPARVSEAIAQAREALG.

The protein belongs to the lyase 1 family. Argininosuccinate lyase subfamily.

It is found in the cytoplasm. It carries out the reaction 2-(N(omega)-L-arginino)succinate = fumarate + L-arginine. Its pathway is amino-acid biosynthesis; L-arginine biosynthesis; L-arginine from L-ornithine and carbamoyl phosphate: step 3/3. This Deinococcus deserti (strain DSM 17065 / CIP 109153 / LMG 22923 / VCD115) protein is Argininosuccinate lyase.